The following is a 398-amino-acid chain: Histone-lysine N-methyltransferase ASHR2 (398 aa).

One can recognise an SET domain in the interval 11–270 (TLLRVAEIGG…EGREVCLSYF (260 aa)).

This sequence belongs to the class V-like SAM-binding methyltransferase superfamily. Histone-lysine methyltransferase family. SET2 subfamily.

Its subcellular location is the nucleus. It localises to the chromosome. The catalysed reaction is L-lysyl-[histone] + S-adenosyl-L-methionine = N(6)-methyl-L-lysyl-[histone] + S-adenosyl-L-homocysteine + H(+). In terms of biological role, histone methyltransferase. This chain is Histone-lysine N-methyltransferase ASHR2 (ASHR2), found in Arabidopsis thaliana (Mouse-ear cress).